An 846-amino-acid chain; its full sequence is Homeodomain-interacting protein kinase 1 (846 aa).

Positions 47 to 74 (NPFSIQKAPGTSSDNEQRAPKRRADEEA) are disordered. Residues 61 to 72 (NEQRAPKRRADE) show a composition bias toward basic and acidic residues. The Protein kinase domain occupies 147–483 (YEVLEFLGKG…PAEGLESKFV (337 aa)). Residues 153-161 (LGKGTFGQV) and Lys176 contribute to the ATP site. The active-site Proton acceptor is Asp272. The disordered stretch occupies residues 741–790 (LAAQPKKNSPAPSVITLSSDEDSNGAGSSNSGSTTRTGAVNPVRNDTLPM). Residues 746-757 (KKNSPAPSVITL) are compositionally biased toward polar residues. A compositionally biased stretch (low complexity) spans 764-773 (NGAGSSNSGS).

It belongs to the protein kinase superfamily. CMGC Ser/Thr protein kinase family. HIPK subfamily. In terms of tissue distribution, broadly expressed during embryogenesis. Expression becomes more restricted during larval development. L3 larvae display robust expression in many head and motor neurons, and lower levels of expression in the intestine and the seam cells of the hypodermis. By late L4 stage, expression is largely restricted to neurons and is maintained in nerve cells of the head and nerve cord during adulthood. Expressed in adult pharyngeal cells, hypodermal cells, gonadal sheath cells and distal tip cells but not in germline cells. Expressed in serotonergic neurons such as ADF and NSM and in GABAergic neurons, including RME, RIS and DVB.

The protein localises to the nucleus. The enzyme catalyses L-seryl-[protein] + ATP = O-phospho-L-seryl-[protein] + ADP + H(+). It carries out the reaction L-threonyl-[protein] + ATP = O-phospho-L-threonyl-[protein] + ADP + H(+). Serine/threonine-protein kinase required in the somatic gonadal cells to regulate germline proliferation during larval development and in adulthood. Plays a role in the development/differentiation of gonadal distal tip cells. Required for normal lifespan in a pha-4 and mxl-2-dependent manner. Also contributes to survival following heat or oxidative stress. Prevents sumoylation and inactivation of heat shock transcription factor hsf-1 which enhances hsf-1-dependent transcriptional induction of chaperones in response to heat shock. Also required for hormetic extension of longevity in response to heat stress. Also contributes to longevity by promoting autophagy under nutrient stress conditions through induction of autophagosome formation and autophagy gene expression. Provides protection against proteotoxic polyglutamine aggregate and the associated locomotory toxicity, probably as a result of kinase activity. Contributes to longevity via gamma-aminobutyric acid (GABA)ergic signaling by promoting autophagy through mxl-2, hlh-30 and daf-16 but independent of hsf-1 and phas-4, to induce autophagosome formation and the expression of autophagy genes. Promotes thermotolerance via serotonergic signaling by serotonergic neurons. Preserves neuronal function in aging animals by mitigating against age-associated decline in axonal and synaptic transmissions. Acts as an activator of nhr-49-dependent hypoxia response, including the up-regulation of fmo-2 and acs-2, the induction of autophagosome formation and expression of autophagy genes. This is Homeodomain-interacting protein kinase 1 from Caenorhabditis elegans.